The following is a 129-amino-acid chain: uncharacterized protein (129 aa).

Helical transmembrane passes span Leu49–Val69, Phe72–Phe92, and Tyr101–Gln118.

The protein localises to the membrane. This is an uncharacterized protein from Saccharomyces cerevisiae (strain ATCC 204508 / S288c) (Baker's yeast).